A 625-amino-acid chain; its full sequence is MSTNQETRGFQSEVKQLLQLMIHSLYSNKEIFLRELISNASDAADKLRFKALSNPALYEGDGELRVRVSFDETLGTLTISDNGIGMNREQVIDHLGTIAKSGTKEFLNSLGTDQAKDSQLIGQFGVGFYSAFIVADKVTVKTRAAGETQAVLWESAGEGDYTVADIEKATRGTDVILHLREEEKEFLSEWRLREIIGKYSDHIGLPVEIQTTEYNEEGKASGQKWEKINKAQALWTRSKNEISDEEYQEFYKHLSHDYNDSLIWAHNKVEGKQEYTSLLYVPAKAPWDLFNRDQKHGLKLYVQRVFIMDDAEVFMPNYLRFMRGLLDTNDLPLNVSREILQENKITASLRAALTKRALQLLEKLAKDDQAKYQTFWNEFGLVLKEGVGEDFANKQQIASLFRFASTQTDSSEQTVSLADYVGRMKEGQKAIYFLTADSYVAAKNSPHLELFNKKGIEVLLLSDRIDEWVVGHLTEFDGKPLQSITKSDLDLGDLADKEQEESQKAQQAEFGSFLERAQSYFGERVKKVVLTHRLTDTPAVVSTDNDEMTTQMAKLFAAMGQKAPEVKYTFELNPDHRMVKKIADLTDETKFNDWIELLFEQALLAERGSLENPAAFIKRMNKLLG.

The interval 1–337 (MSTNQETRGF…TNDLPLNVSR (337 aa)) is a; substrate-binding. Positions 338–554 (EILQENKITA…NDEMTTQMAK (217 aa)) are b. Residues 555–625 (LFAAMGQKAP…FIKRMNKLLG (71 aa)) are c.

Belongs to the heat shock protein 90 family. In terms of assembly, homodimer.

It localises to the cytoplasm. Functionally, molecular chaperone. Has ATPase activity. The protein is Chaperone protein HtpG of Actinobacillus pleuropneumoniae serotype 5b (strain L20).